We begin with the raw amino-acid sequence, 303 residues long: ATP phosphoribosyltransferase (303 aa).

The protein belongs to the ATP phosphoribosyltransferase family. Long subfamily. It depends on Mg(2+) as a cofactor.

The protein localises to the cytoplasm. The catalysed reaction is 1-(5-phospho-beta-D-ribosyl)-ATP + diphosphate = 5-phospho-alpha-D-ribose 1-diphosphate + ATP. It functions in the pathway amino-acid biosynthesis; L-histidine biosynthesis; L-histidine from 5-phospho-alpha-D-ribose 1-diphosphate: step 1/9. Its activity is regulated as follows. Feedback inhibited by histidine. In terms of biological role, catalyzes the condensation of ATP and 5-phosphoribose 1-diphosphate to form N'-(5'-phosphoribosyl)-ATP (PR-ATP). Has a crucial role in the pathway because the rate of histidine biosynthesis seems to be controlled primarily by regulation of HisG enzymatic activity. The polypeptide is ATP phosphoribosyltransferase (Haemophilus influenzae (strain PittGG)).